The primary structure comprises 212 residues: Casparian strip membrane protein 1 (212 aa).

The tract at residues 1-28 (MDSSNSTKETGDIPIPVTSSKSSKAAPP) is disordered. Residues 1-49 (MDSSNSTKETGDIPIPVTSSKSSKAAPPPVVAAKAKSTTKQPLVSGWKR) are Cytoplasmic-facing. Low complexity predominate over residues 16–28 (PVTSSKSSKAAPP). Residues 50–70 (GLGIIDFILRICAIAAALAAA) form a helical membrane-spanning segment. Residues 71–100 (TAMGTTSQQLPFFTQFFQFKADYNDLPAFT) are Extracellular-facing. The chain crosses the membrane as a helical span at residues 101–121 (FFVIANAMAGAYLVLSLPFSI). Over 122–133 (LCIVRPHILGAR) the chain is Cytoplasmic. Residues 134–154 (LMLLVFDTVAVPLVTAAASAA) traverse the membrane as a helical segment. At 155–186 (ASIVYLAHNGNSDANWVAICRQFNDFCQRVSG) the chain is on the extracellular side. Residues 187 to 207 (AVVASFITALLFVVLVAVSAV) form a helical membrane-spanning segment. Residues 208–212 (ALRQK) lie on the Cytoplasmic side of the membrane.

It belongs to the Casparian strip membrane proteins (CASP) family. As to quaternary structure, homodimer and heterodimers.

The protein resides in the cell membrane. Regulates membrane-cell wall junctions and localized cell wall deposition. Required for establishment of the Casparian strip membrane domain (CSD) and the subsequent formation of Casparian strips, a cell wall modification of the root endodermis that determines an apoplastic barrier between the intraorganismal apoplasm and the extraorganismal apoplasm and prevents lateral diffusion. The protein is Casparian strip membrane protein 1 of Helianthus annuus (Common sunflower).